The chain runs to 358 residues: Nicotinate-nucleotide--dimethylbenzimidazole phosphoribosyltransferase (358 aa).

The active-site Proton acceptor is Glu313.

This sequence belongs to the CobT family.

The enzyme catalyses 5,6-dimethylbenzimidazole + nicotinate beta-D-ribonucleotide = alpha-ribazole 5'-phosphate + nicotinate + H(+). The protein operates within nucleoside biosynthesis; alpha-ribazole biosynthesis; alpha-ribazole from 5,6-dimethylbenzimidazole: step 1/2. Its function is as follows. Catalyzes the synthesis of alpha-ribazole-5'-phosphate from nicotinate mononucleotide (NAMN) and 5,6-dimethylbenzimidazole (DMB). This chain is Nicotinate-nucleotide--dimethylbenzimidazole phosphoribosyltransferase, found in Corynebacterium glutamicum (strain ATCC 13032 / DSM 20300 / JCM 1318 / BCRC 11384 / CCUG 27702 / LMG 3730 / NBRC 12168 / NCIMB 10025 / NRRL B-2784 / 534).